The sequence spans 210 residues: Resolvase (210 aa).

The 145-residue stretch at 6-150 (VARVYLRVSS…EDRRERQRQG (145 aa)) folds into the Resolvase/invertase-type recombinase catalytic domain. Ser14 (O-(5'-phospho-DNA)-serine intermediate) is an active-site residue. Positions 191-210 (GVSVSQVKRVWAQNQTKDKV) form a DNA-binding region, H-T-H motif.

Belongs to the site-specific recombinase resolvase family.

Functionally, site-specific recombination protein. The protein is Resolvase (stbA) of Pseudomonas syringae pv. tomato.